The sequence spans 379 residues: SUN domain-containing protein 5 (379 aa).

Residues 1–45 (MPRSSRSPGDPGALLEDVAHNPRPRRIAQRGRNTSRMAEDTSPNM) are disordered. Over 1-105 (MPRSSRSPGD…LLCQKLMEKT (105 aa)) the chain is Nuclear. The span at 31–45 (GRNTSRMAEDTSPNM) shows a compositional bias: polar residues. A helical transmembrane segment spans residues 106 to 122 (GILLLCAFGFWMFSIHL). The Perinuclear space segment spans residues 123–379 (PSKMKVWQDD…PHQNPYPKRD (257 aa)). Residues 141 to 182 (LRLYQEKVRHHSGEIQDLRGSMNQLIAKLQEMEAMSDEQKMA) adopt a coiled-coil conformation. Positions 205 to 364 (GASIDFEHTS…YRVRVHGSVA (160 aa)) constitute an SUN domain.

In terms of assembly, probable homotrimer. Interacts with DNAJB13. Post-translationally, highly glycosylated in the Golgi apparatus during spermiogenesis. In terms of tissue distribution, sperm (at protein level). Widely expressed. Conflictingly shown to be specifically expressed in testis.

The protein localises to the nucleus inner membrane. The protein resides in the golgi apparatus. Plays an essential role in anchoring sperm head to the tail. Is responsible for the attachment of the coupling apparatus to the sperm nuclear envelope. This Homo sapiens (Human) protein is SUN domain-containing protein 5 (SUN5).